Reading from the N-terminus, the 373-residue chain is Dual-specificity RNA methyltransferase RlmN (373 aa).

Glu94 serves as the catalytic Proton acceptor. Positions 100 to 339 (EEDRATLCVS…VIVRKTRGDD (240 aa)) constitute a Radical SAM core domain. Cys107 and Cys344 are oxidised to a cystine. [4Fe-4S] cluster-binding residues include Cys114, Cys118, and Cys121. S-adenosyl-L-methionine contacts are provided by residues 168–169 (GE), Ser200, 222–224 (SIH), and Asn301. Cys344 functions as the S-methylcysteine intermediate in the catalytic mechanism.

It belongs to the radical SAM superfamily. RlmN family. It depends on [4Fe-4S] cluster as a cofactor.

The protein resides in the cytoplasm. It carries out the reaction adenosine(2503) in 23S rRNA + 2 reduced [2Fe-2S]-[ferredoxin] + 2 S-adenosyl-L-methionine = 2-methyladenosine(2503) in 23S rRNA + 5'-deoxyadenosine + L-methionine + 2 oxidized [2Fe-2S]-[ferredoxin] + S-adenosyl-L-homocysteine. The catalysed reaction is adenosine(37) in tRNA + 2 reduced [2Fe-2S]-[ferredoxin] + 2 S-adenosyl-L-methionine = 2-methyladenosine(37) in tRNA + 5'-deoxyadenosine + L-methionine + 2 oxidized [2Fe-2S]-[ferredoxin] + S-adenosyl-L-homocysteine. Its function is as follows. Specifically methylates position 2 of adenine 2503 in 23S rRNA and position 2 of adenine 37 in tRNAs. m2A2503 modification seems to play a crucial role in the proofreading step occurring at the peptidyl transferase center and thus would serve to optimize ribosomal fidelity. This is Dual-specificity RNA methyltransferase RlmN from Shewanella frigidimarina (strain NCIMB 400).